A 199-amino-acid polypeptide reads, in one-letter code: Female-specific protein transformer (199 aa).

Disordered regions lie at residues 1-121 (MDAD…RTPR) and 178-199 (YRAGPFRPHPRYSYRNDRQAPN). Residues 20-37 (REKMPYFADEVRERDRVR) are compositionally biased toward basic and acidic residues. 3 stretches are compositionally biased toward basic residues: residues 56–69 (RRSRHERPRSRSRT), 77–92 (CQRRLSRSYVRHRSGS), and 102–119 (SRRRRSRSRSRSRGRSRT).

Its subcellular location is the nucleus speckle. Member of the regulatory pathway controlling female somatic sexual differentiation, regulated by Sxl. Activates dsx female-specific splicing by promoting the formation of a splicing enhancer complex which consists of tra, tra2 and sr proteins. The protein is Female-specific protein transformer (tra) of Drosophila virilis (Fruit fly).